The primary structure comprises 505 residues: Apolipoprotein N-acyltransferase (505 aa).

A run of 7 helical transmembrane segments spans residues 6–26 (PSIL…CLAF), 29–49 (FDIW…ATLV), 53–73 (TAML…VQWV), 80–100 (FGGV…SYLG), 119–139 (FVLA…FTGF), 152–172 (PFAQ…VILL), and 189–209 (TFTK…LQFV). The region spanning 223-469 (IQANIEQQLK…TNTLTAEIAT (247 aa)) is the CN hydrolase domain. E263 (proton acceptor) is an active-site residue. The active site involves K328. C379 functions as the Nucleophile in the catalytic mechanism. A helical transmembrane segment spans residues 475–495 (LFGQFGHWLIYSLSFICVAFG).

Belongs to the CN hydrolase family. Apolipoprotein N-acyltransferase subfamily.

The protein localises to the cell inner membrane. It carries out the reaction N-terminal S-1,2-diacyl-sn-glyceryl-L-cysteinyl-[lipoprotein] + a glycerophospholipid = N-acyl-S-1,2-diacyl-sn-glyceryl-L-cysteinyl-[lipoprotein] + a 2-acyl-sn-glycero-3-phospholipid + H(+). It participates in protein modification; lipoprotein biosynthesis (N-acyl transfer). Catalyzes the phospholipid dependent N-acylation of the N-terminal cysteine of apolipoprotein, the last step in lipoprotein maturation. This is Apolipoprotein N-acyltransferase from Haemophilus ducreyi (strain 35000HP / ATCC 700724).